Consider the following 103-residue polypeptide: Co-chaperonin GroES (103 aa).

The protein belongs to the GroES chaperonin family. Heptamer of 7 subunits arranged in a ring. Interacts with the chaperonin GroEL.

The protein resides in the cytoplasm. Its function is as follows. Together with the chaperonin GroEL, plays an essential role in assisting protein folding. The GroEL-GroES system forms a nano-cage that allows encapsulation of the non-native substrate proteins and provides a physical environment optimized to promote and accelerate protein folding. GroES binds to the apical surface of the GroEL ring, thereby capping the opening of the GroEL channel. This is Co-chaperonin GroES from Prochlorococcus marinus (strain MIT 9515).